A 433-amino-acid chain; its full sequence is Glutamate-1-semialdehyde 2,1-aminomutase (433 aa).

Residue Lys-266 is modified to N6-(pyridoxal phosphate)lysine.

It belongs to the class-III pyridoxal-phosphate-dependent aminotransferase family. HemL subfamily. In terms of assembly, homodimer. Pyridoxal 5'-phosphate is required as a cofactor.

The protein localises to the cytoplasm. It catalyses the reaction (S)-4-amino-5-oxopentanoate = 5-aminolevulinate. It functions in the pathway porphyrin-containing compound metabolism; protoporphyrin-IX biosynthesis; 5-aminolevulinate from L-glutamyl-tRNA(Glu): step 2/2. The protein is Glutamate-1-semialdehyde 2,1-aminomutase of Psychrobacter cryohalolentis (strain ATCC BAA-1226 / DSM 17306 / VKM B-2378 / K5).